We begin with the raw amino-acid sequence, 212 residues long: uncharacterized protein (212 aa).

The chain crosses the membrane as a helical span at residues N11 to I31.

Its subcellular location is the membrane. This is an uncharacterized protein from Rickettsia prowazekii (strain Madrid E).